We begin with the raw amino-acid sequence, 340 residues long: Phosphoribosylformylglycinamidine cyclo-ligase (340 aa).

Belongs to the AIR synthase family.

It localises to the cytoplasm. The enzyme catalyses 2-formamido-N(1)-(5-O-phospho-beta-D-ribosyl)acetamidine + ATP = 5-amino-1-(5-phospho-beta-D-ribosyl)imidazole + ADP + phosphate + H(+). It participates in purine metabolism; IMP biosynthesis via de novo pathway; 5-amino-1-(5-phospho-D-ribosyl)imidazole from N(2)-formyl-N(1)-(5-phospho-D-ribosyl)glycinamide: step 2/2. The protein is Phosphoribosylformylglycinamidine cyclo-ligase of Acetivibrio thermocellus (strain ATCC 27405 / DSM 1237 / JCM 9322 / NBRC 103400 / NCIMB 10682 / NRRL B-4536 / VPI 7372) (Clostridium thermocellum).